We begin with the raw amino-acid sequence, 219 residues long: Ribose-5-phosphate isomerase A (219 aa).

Residues 28-31 (TGST), 81-84 (DGAD), and 94-97 (KGGG) contribute to the substrate site. Glu103 acts as the Proton acceptor in catalysis. Residue Lys121 coordinates substrate.

The protein belongs to the ribose 5-phosphate isomerase family. In terms of assembly, homodimer.

It carries out the reaction aldehydo-D-ribose 5-phosphate = D-ribulose 5-phosphate. The protein operates within carbohydrate degradation; pentose phosphate pathway; D-ribose 5-phosphate from D-ribulose 5-phosphate (non-oxidative stage): step 1/1. Catalyzes the reversible conversion of ribose-5-phosphate to ribulose 5-phosphate. This chain is Ribose-5-phosphate isomerase A, found in Salmonella choleraesuis (strain SC-B67).